The following is a 228-amino-acid chain: uncharacterized protein (228 aa).

A run of 5 helical transmembrane segments spans residues 14 to 34 (HTIS…MLLA), 42 to 62 (VALF…AITL), 130 to 150 (FMFS…LVGS), 156 to 176 (FSFD…VLFM), and 192 to 212 (IAIA…LIAL).

This sequence belongs to the AzlC family.

The protein localises to the cell membrane. This is an uncharacterized protein from Helicobacter pylori (strain J99 / ATCC 700824) (Campylobacter pylori J99).